The chain runs to 695 residues: DNA ligase (695 aa).

NAD(+) is bound by residues 36-40, 85-86, and E123; these read DADYD and SL. Residue K125 is the N6-AMP-lysine intermediate of the active site. NAD(+) is bound by residues R146, E182, K318, and K342. Positions 436, 439, 454, and 460 each coordinate Zn(2+). The 79-residue stretch at 617–695 folds into the BRCT domain; that stretch reads LQSGDLAGKT…EDGLKALLSQ (79 aa).

This sequence belongs to the NAD-dependent DNA ligase family. LigA subfamily. It depends on Mg(2+) as a cofactor. The cofactor is Mn(2+).

It carries out the reaction NAD(+) + (deoxyribonucleotide)n-3'-hydroxyl + 5'-phospho-(deoxyribonucleotide)m = (deoxyribonucleotide)n+m + AMP + beta-nicotinamide D-nucleotide.. DNA ligase that catalyzes the formation of phosphodiester linkages between 5'-phosphoryl and 3'-hydroxyl groups in double-stranded DNA using NAD as a coenzyme and as the energy source for the reaction. It is essential for DNA replication and repair of damaged DNA. The sequence is that of DNA ligase from Bordetella avium (strain 197N).